Consider the following 453-residue polypeptide: GTPase Der (453 aa).

2 EngA-type G domains span residues 3–167 and 188–361; these read PIIV…INSK and VKIA…HTSQ. Residues 9–16, 57–61, 119–122, 194–201, 241–245, and 306–309 contribute to the GTP site; these read GRTNVGKS, DTAGI, NKID, GKPNVGKS, DTAGM, and NKCD. The 85-residue stretch at 362–446 folds into the KH-like domain; the sequence is KKIKTSQVMK…PIKIQFKETM (85 aa).

This sequence belongs to the TRAFAC class TrmE-Era-EngA-EngB-Septin-like GTPase superfamily. EngA (Der) GTPase family. In terms of assembly, associates with the 50S ribosomal subunit.

In terms of biological role, GTPase that plays an essential role in the late steps of ribosome biogenesis. The chain is GTPase Der from Buchnera aphidicola subsp. Schizaphis graminum (strain Sg).